A 1690-amino-acid polypeptide reads, in one-letter code: DNA-directed RNA polymerase subunit beta' (1690 aa).

Residues Cys-63, Cys-65, Cys-78, and Cys-81 each coordinate Zn(2+). Positions 753, 755, and 757 each coordinate Mg(2+). Residues Cys-1107, Cys-1295, Cys-1302, and Cys-1305 each coordinate Zn(2+).

It belongs to the RNA polymerase beta' chain family. As to quaternary structure, the RNAP catalytic core consists of 2 alpha, 1 beta, 1 beta' and 1 omega subunit. When a sigma factor is associated with the core the holoenzyme is formed, which can initiate transcription. It depends on Mg(2+) as a cofactor. The cofactor is Zn(2+).

The catalysed reaction is RNA(n) + a ribonucleoside 5'-triphosphate = RNA(n+1) + diphosphate. In terms of biological role, DNA-dependent RNA polymerase catalyzes the transcription of DNA into RNA using the four ribonucleoside triphosphates as substrates. The polypeptide is DNA-directed RNA polymerase subunit beta' (Thermotoga petrophila (strain ATCC BAA-488 / DSM 13995 / JCM 10881 / RKU-1)).